The primary structure comprises 711 residues: Tyrosine-protein phosphatase 2 (711 aa).

Residues 21–130 enclose the Rhodanese domain; sequence TESVSWIIDL…FASSHPDAIV (110 aa). Disordered stretches follow at residues 275–306 and 329–376; these read APQQ…SRVR and IIPR…RANK. 2 stretches are compositionally biased toward polar residues: residues 290–306 and 340–363; these read SYPS…SRVR and NAQN…SNTR. In terms of domain architecture, Tyrosine-protein phosphatase spans 433 to 698; it reads EMTRSLAFND…KFLYDVVDYL (266 aa). Catalysis depends on Cys630, which acts as the Phosphocysteine intermediate.

Belongs to the protein-tyrosine phosphatase family. Non-receptor class subfamily.

The protein resides in the cytoplasm. It catalyses the reaction O-phospho-L-tyrosyl-[protein] + H2O = L-tyrosyl-[protein] + phosphate. Plays a role in inhibiting the onset of mitosis. Dephosphorylates sty1/spc1 and wis1/spc2/sty2. The polypeptide is Tyrosine-protein phosphatase 2 (pyp2) (Schizosaccharomyces pombe (strain 972 / ATCC 24843) (Fission yeast)).